Consider the following 345-residue polypeptide: Fructose-1,6-bisphosphatase class 1 2 (345 aa).

Mg(2+) is bound by residues E90, D109, L111, and D112. Residues 112–115 and N200 contribute to the substrate site; that span reads DGSS. E272 is a binding site for Mg(2+).

This sequence belongs to the FBPase class 1 family. Homotetramer. It depends on Mg(2+) as a cofactor.

Its subcellular location is the cytoplasm. It catalyses the reaction beta-D-fructose 1,6-bisphosphate + H2O = beta-D-fructose 6-phosphate + phosphate. Its pathway is carbohydrate biosynthesis; gluconeogenesis. In Nitrobacter hamburgensis (strain DSM 10229 / NCIMB 13809 / X14), this protein is Fructose-1,6-bisphosphatase class 1 2.